We begin with the raw amino-acid sequence, 554 residues long: RecBCD enzyme subunit RecD (554 aa).

ATP is bound at residue 155 to 162 (GGPGTGKT).

Belongs to the RecD family. In terms of assembly, heterotrimer of RecB, RecC and RecD. All subunits contribute to DNA-binding.

It catalyses the reaction Couples ATP hydrolysis with the unwinding of duplex DNA at the replication fork by translocating in the 5'-3' direction. This creates two antiparallel DNA single strands (ssDNA). The leading ssDNA polymer is the template for DNA polymerase III holoenzyme which synthesizes a continuous strand.. The catalysed reaction is ATP + H2O = ADP + phosphate + H(+). Its function is as follows. A helicase/nuclease that prepares dsDNA breaks (DSB) for recombinational DNA repair. Binds to DSBs and unwinds DNA via a highly rapid and processive ATP-dependent bidirectional helicase activity. Holoenzyme degrades any linearized DNA that is unable to undergo homologous recombination. In the holoenzyme this subunit has ssDNA-dependent ATPase and 5'-3' helicase activity. When added to pre-assembled RecBC greatly stimulates nuclease activity and augments holoenzyme processivity. Unlike the case in E.coli, suppresses RecA-dependent homologous recombination, is instead required for single-strand annealing pathway repair of DSB. This chain is RecBCD enzyme subunit RecD, found in Mycolicibacterium smegmatis (strain ATCC 700084 / mc(2)155) (Mycobacterium smegmatis).